Here is a 669-residue protein sequence, read N- to C-terminus: Probable pectinesterase/pectinesterase inhibitor 21 (669 aa).

Residues Ile-16–Val-36 traverse the membrane as a helical segment. N-linked (GlcNAc...) asparagine glycosylation is found at Asn-52, Asn-81, Asn-94, Asn-281, and Asn-300. Residues Asn-52–Ile-205 form a pectinesterase inhibitor 21 region. The pectinesterase 21 stretch occupies residues Asp-255–Asp-551. The substrate site is built by Thr-330 and Gln-360. Asp-383 (proton donor; for pectinesterase activity) is an active-site residue. Residues Cys-397 and Cys-417 are joined by a disulfide bond. Residue Asp-404 is the Nucleophile; for pectinesterase activity of the active site. N-linked (GlcNAc...) asparagine glycosylation is present at Asn-416. Positions 472 and 474 each coordinate substrate. The tract at residues Ala-615 to Thr-669 is disordered. Over residues Tyr-616–Val-628 the composition is skewed to polar residues. Positions Ser-629 to Ser-652 are enriched in low complexity. The span at Met-654–Thr-669 shows a compositional bias: polar residues.

It in the N-terminal section; belongs to the PMEI family. This sequence in the C-terminal section; belongs to the pectinesterase family. Expressed in flower buds.

The protein localises to the membrane. It catalyses the reaction [(1-&gt;4)-alpha-D-galacturonosyl methyl ester](n) + n H2O = [(1-&gt;4)-alpha-D-galacturonosyl](n) + n methanol + n H(+). It functions in the pathway glycan metabolism; pectin degradation; 2-dehydro-3-deoxy-D-gluconate from pectin: step 1/5. Acts in the modification of cell walls via demethylesterification of cell wall pectin. In Arabidopsis thaliana (Mouse-ear cress), this protein is Probable pectinesterase/pectinesterase inhibitor 21 (PME21).